Here is a 541-residue protein sequence, read N- to C-terminus: uncharacterized protein (541 aa).

6 helical membrane passes run 57–77 (LVVT…TIAI), 90–110 (LTFG…SYAL), 144–164 (VGHL…YGLI), 167–187 (AFIP…ATAT), 221–241 (MVVW…MAMF), and 257–277 (VLII…ILAW). One can recognise an HAMP domain in the interval 278-329 (LTATPVRVVRAALRRVERGELRTNLVVFDGTELGELQRGFNAMVAGLRERER). The region spanning 361-485 (AVVFIDIVGS…EPVNEAARLC (125 aa)) is the Guanylate cyclase domain.

It belongs to the adenylyl cyclase class-3 family.

It localises to the cell membrane. This is an uncharacterized protein from Mycobacterium tuberculosis (strain CDC 1551 / Oshkosh).